The following is a 1113-amino-acid chain: Coiled-coil domain-containing protein 158 (1113 aa).

A compositionally biased stretch (polar residues) spans Met-1 to Leu-14. The tract at residues Met-1–Ser-26 is disordered. The segment covering Ser-15 to Ser-26 has biased composition (low complexity). Coiled-coil stretches lie at residues Gly-72–Glu-183 and Val-243–Glu-833. Disordered regions lie at residues Leu-848 to Arg-902 and Cys-955 to Thr-1062. Composition is skewed to polar residues over residues Ala-867–Asn-894, Cys-955–Thr-974, Phe-994–Lys-1017, Leu-1024–Arg-1040, and Asp-1053–Thr-1062. The stretch at Thr-1061 to Lys-1113 forms a coiled coil.

The polypeptide is Coiled-coil domain-containing protein 158 (CCDC158) (Homo sapiens (Human)).